The sequence spans 416 residues: MAAEICREEAAKSMPAAAAGATAIARRRRRVEGFRFAAGSLEPPQEDADAGVARCGKRQRVAGARAGAGAATAGPCRPSAGAEFGSRWWPRYGVTSVFGRRREMEDAVSIRPDFLRGSTSSGKHHFFGVFDGHGCSHVARMCQDRMHELVVDAYKKAVSGKEAAAAAPAWKDVMEKGFARMDDEATIWAKSRTGGEPACRCELQTPARCDHVGSTAVVAVVGPNRVVVANSGDSRAVLCRAGVPVPLSVDHKPDRPDELERIKAAGGRVIYWDGARVLGVLAMSRAIGDGYLKPYVTSEPEVTVTERADDDECLILASDGLWDVVTNEMACEVVRACFRSNGPPSPPGCSRPKAVLPPPAGASGGGGGDAVVKGVDKAESDKACADAALLLAKLAIARRSADNVSVVVVDLRRPVP.

The PPM-type phosphatase domain maps to 91–411 (RYGVTSVFGR…DNVSVVVVDL (321 aa)). Positions 131, 132, and 319 each coordinate Mn(2+). The span at 343 to 360 (PPSPPGCSRPKAVLPPPA) shows a compositional bias: pro residues. Residues 343–368 (PPSPPGCSRPKAVLPPPAGASGGGGG) form a disordered region. D402 is a Mn(2+) binding site.

It belongs to the PP2C family. It depends on Mg(2+) as a cofactor. Mn(2+) serves as cofactor.

The enzyme catalyses O-phospho-L-seryl-[protein] + H2O = L-seryl-[protein] + phosphate. It carries out the reaction O-phospho-L-threonyl-[protein] + H2O = L-threonyl-[protein] + phosphate. This is Probable protein phosphatase 2C 49 from Oryza sativa subsp. japonica (Rice).